Here is a 353-residue protein sequence, read N- to C-terminus: UDP-3-O-acylglucosamine N-acyltransferase (353 aa).

Catalysis depends on histidine 246, which acts as the Proton acceptor.

It belongs to the transferase hexapeptide repeat family. LpxD subfamily. Homotrimer.

It carries out the reaction a UDP-3-O-[(3R)-3-hydroxyacyl]-alpha-D-glucosamine + a (3R)-hydroxyacyl-[ACP] = a UDP-2-N,3-O-bis[(3R)-3-hydroxyacyl]-alpha-D-glucosamine + holo-[ACP] + H(+). It participates in bacterial outer membrane biogenesis; LPS lipid A biosynthesis. In terms of biological role, catalyzes the N-acylation of UDP-3-O-acylglucosamine using 3-hydroxyacyl-ACP as the acyl donor. Is involved in the biosynthesis of lipid A, a phosphorylated glycolipid that anchors the lipopolysaccharide to the outer membrane of the cell. This Chlorobaculum tepidum (strain ATCC 49652 / DSM 12025 / NBRC 103806 / TLS) (Chlorobium tepidum) protein is UDP-3-O-acylglucosamine N-acyltransferase.